Reading from the N-terminus, the 82-residue chain is Small ribosomal subunit protein bS16 (82 aa).

It belongs to the bacterial ribosomal protein bS16 family.

In Elusimicrobium minutum (strain Pei191), this protein is Small ribosomal subunit protein bS16.